Here is a 260-residue protein sequence, read N- to C-terminus: Large ribosomal subunit protein uL4 (260 aa).

It belongs to the universal ribosomal protein uL4 family. As to quaternary structure, part of the 50S ribosomal subunit.

One of the primary rRNA binding proteins, this protein initially binds near the 5'-end of the 23S rRNA. It is important during the early stages of 50S assembly. It makes multiple contacts with different domains of the 23S rRNA in the assembled 50S subunit and ribosome. Its function is as follows. Forms part of the polypeptide exit tunnel. In Methanopyrus kandleri (strain AV19 / DSM 6324 / JCM 9639 / NBRC 100938), this protein is Large ribosomal subunit protein uL4.